Reading from the N-terminus, the 549-residue chain is Undecaprenyl phosphate-alpha-4-amino-4-deoxy-L-arabinose arabinosyl transferase 2 (549 aa).

12 helical membrane passes run 9-29, 80-102, 112-132, 133-153, 176-196, 204-224, 259-279, 290-310, 312-332, 342-362, 377-397, and 402-422; these read LLLG…GLWI, LFGV…FLIA, SFVC…AGYA, NLDP…WFAL, FMTK…PWML, LLLY…PWAL, FYLP…PVAF, GIAF…LSNG, LPTY…HALA, ALGL…IGLV, SLVL…LQAF, and CWAA…AALP.

This sequence belongs to the glycosyltransferase 83 family.

The protein resides in the cell inner membrane. It carries out the reaction 4-amino-4-deoxy-alpha-L-arabinopyranosyl di-trans,octa-cis-undecaprenyl phosphate + lipid IVA = lipid IIA + di-trans,octa-cis-undecaprenyl phosphate.. It functions in the pathway lipopolysaccharide metabolism; 4-amino-4-deoxy-beta-L-arabinose-lipid A biosynthesis. Functionally, catalyzes the transfer of the L-Ara4N moiety of the glycolipid undecaprenyl phosphate-alpha-L-Ara4N to lipid A. The modified arabinose is attached to lipid A and is required for resistance to polymyxin and cationic antimicrobial peptides. This Pseudomonas fluorescens (strain Pf0-1) protein is Undecaprenyl phosphate-alpha-4-amino-4-deoxy-L-arabinose arabinosyl transferase 2.